The sequence spans 481 residues: Phosphoglucosamine mutase (481 aa).

The active-site Phosphoserine intermediate is the Ser-129. 4 residues coordinate Mg(2+): Ser-129, Asp-271, Asp-273, and Asp-275. A Phosphoserine modification is found at Ser-129.

This sequence belongs to the phosphohexose mutase family. Mg(2+) is required as a cofactor. In terms of processing, activated by phosphorylation.

The enzyme catalyses alpha-D-glucosamine 1-phosphate = D-glucosamine 6-phosphate. In terms of biological role, catalyzes the conversion of glucosamine-6-phosphate to glucosamine-1-phosphate. This is Phosphoglucosamine mutase from Picosynechococcus sp. (strain ATCC 27264 / PCC 7002 / PR-6) (Agmenellum quadruplicatum).